A 287-amino-acid chain; its full sequence is MILLDGKALSEKIKAEVKLEVEEIVKEKEITPGLAVILVGNDPASATYVASKAKSCENAGIYSVVHKMPETITQEELLQTIAMMNKNPKLDGILVQLPLPKQIDTTVVLEAIDPLKDVDGFHPYNVGRMVSNLDAFLPATPFGVMRMFEEYGIELSGKNVVVIGSSDIVGKPMASLLINAKATVTVCNSRTKDLKAHTLAADIVVIAVGVPFLLKEDMVKDGAIVIDVGINRLDTGKLVGDADFEGLKNKCSFLTPVPGGVGPMTIAMLLKNTIKASKLREKRENRC.

NADP(+) contacts are provided by residues 164 to 166, Ser189, and Ile230; that span reads GSS.

It belongs to the tetrahydrofolate dehydrogenase/cyclohydrolase family. Homodimer.

The enzyme catalyses (6R)-5,10-methylene-5,6,7,8-tetrahydrofolate + NADP(+) = (6R)-5,10-methenyltetrahydrofolate + NADPH. It carries out the reaction (6R)-5,10-methenyltetrahydrofolate + H2O = (6R)-10-formyltetrahydrofolate + H(+). It functions in the pathway one-carbon metabolism; tetrahydrofolate interconversion. Its function is as follows. Catalyzes the oxidation of 5,10-methylenetetrahydrofolate to 5,10-methenyltetrahydrofolate and then the hydrolysis of 5,10-methenyltetrahydrofolate to 10-formyltetrahydrofolate. The polypeptide is Bifunctional protein FolD (Aliarcobacter butzleri (strain RM4018) (Arcobacter butzleri)).